We begin with the raw amino-acid sequence, 470 residues long: Siroheme synthase (470 aa).

The interval 1–201 is precorrin-2 dehydrogenase /sirohydrochlorin ferrochelatase; sequence MDYFPIFCQL…NDHVQADQHV (201 aa). NAD(+) contacts are provided by residues 22–23 and 43–44; these read EI and CE. S128 is modified (phosphoserine). Residues 213–470 are uroporphyrinogen-III C-methyltransferase; it reads GEVVLVGAGP…KVTECVAHVG (258 aa). Residue P222 coordinates S-adenosyl-L-methionine. D245 serves as the catalytic Proton acceptor. The active-site Proton donor is K267. Residues 298 to 300, I303, 328 to 329, M379, and G408 each bind S-adenosyl-L-methionine; these read GGD and TA.

This sequence in the N-terminal section; belongs to the precorrin-2 dehydrogenase / sirohydrochlorin ferrochelatase family. The protein in the C-terminal section; belongs to the precorrin methyltransferase family.

The catalysed reaction is uroporphyrinogen III + 2 S-adenosyl-L-methionine = precorrin-2 + 2 S-adenosyl-L-homocysteine + H(+). It catalyses the reaction precorrin-2 + NAD(+) = sirohydrochlorin + NADH + 2 H(+). The enzyme catalyses siroheme + 2 H(+) = sirohydrochlorin + Fe(2+). Its pathway is cofactor biosynthesis; adenosylcobalamin biosynthesis; precorrin-2 from uroporphyrinogen III: step 1/1. The protein operates within cofactor biosynthesis; adenosylcobalamin biosynthesis; sirohydrochlorin from precorrin-2: step 1/1. It participates in porphyrin-containing compound metabolism; siroheme biosynthesis; precorrin-2 from uroporphyrinogen III: step 1/1. It functions in the pathway porphyrin-containing compound metabolism; siroheme biosynthesis; siroheme from sirohydrochlorin: step 1/1. Its pathway is porphyrin-containing compound metabolism; siroheme biosynthesis; sirohydrochlorin from precorrin-2: step 1/1. Multifunctional enzyme that catalyzes the SAM-dependent methylations of uroporphyrinogen III at position C-2 and C-7 to form precorrin-2 via precorrin-1. Then it catalyzes the NAD-dependent ring dehydrogenation of precorrin-2 to yield sirohydrochlorin. Finally, it catalyzes the ferrochelation of sirohydrochlorin to yield siroheme. In Yersinia pestis, this protein is Siroheme synthase.